The chain runs to 99 residues: Ribosomal processing cysteine protease Prp (99 aa).

H16 (proton donor) is an active-site residue. The active-site Nucleophile is the C28.

This sequence belongs to the Prp family. As to quaternary structure, homodimer.

Its function is as follows. An essential cysteine protease that cleaves the N-terminus from ribosomal protein bL27. The chain is Ribosomal processing cysteine protease Prp from Mycoplasma genitalium (strain ATCC 33530 / DSM 19775 / NCTC 10195 / G37) (Mycoplasmoides genitalium).